The chain runs to 119 residues: Integration host factor subunit beta (119 aa).

The disordered stretch occupies residues 91-119 (DLVGNDQGDDSSNGSSDPLQSVMDMHAMH). Residues 94-107 (GNDQGDDSSNGSSD) show a composition bias toward low complexity.

Belongs to the bacterial histone-like protein family. In terms of assembly, heterodimer of an alpha and a beta chain.

Functionally, this protein is one of the two subunits of integration host factor, a specific DNA-binding protein that functions in genetic recombination as well as in transcriptional and translational control. The polypeptide is Integration host factor subunit beta (Bordetella parapertussis (strain 12822 / ATCC BAA-587 / NCTC 13253)).